A 257-amino-acid polypeptide reads, in one-letter code: Glutamate racemase (257 aa).

Residues 12-13 (DS) and 44-45 (YG) contribute to the substrate site. Cysteine 75 serves as the catalytic Proton donor/acceptor. A substrate-binding site is contributed by 76–77 (NT). The Proton donor/acceptor role is filled by cysteine 185. 186 to 187 (TH) contacts substrate.

It belongs to the aspartate/glutamate racemases family.

It carries out the reaction L-glutamate = D-glutamate. The protein operates within cell wall biogenesis; peptidoglycan biosynthesis. Its function is as follows. Provides the (R)-glutamate required for cell wall biosynthesis. The chain is Glutamate racemase from Clostridium botulinum (strain Loch Maree / Type A3).